The sequence spans 89 residues: Small ribosomal subunit protein uS15 (89 aa).

The protein belongs to the universal ribosomal protein uS15 family. Part of the 30S ribosomal subunit. Forms a bridge to the 50S subunit in the 70S ribosome, contacting the 23S rRNA.

Its function is as follows. One of the primary rRNA binding proteins, it binds directly to 16S rRNA where it helps nucleate assembly of the platform of the 30S subunit by binding and bridging several RNA helices of the 16S rRNA. Forms an intersubunit bridge (bridge B4) with the 23S rRNA of the 50S subunit in the ribosome. The polypeptide is Small ribosomal subunit protein uS15 (Chlamydia caviae (strain ATCC VR-813 / DSM 19441 / 03DC25 / GPIC) (Chlamydophila caviae)).